The primary structure comprises 234 residues: 1-(5-phosphoribosyl)-5-[(5-phosphoribosylamino)methylideneamino] imidazole-4-carboxamide isomerase (234 aa).

Aspartate 9 serves as the catalytic Proton acceptor. Aspartate 131 (proton donor) is an active-site residue.

The protein belongs to the HisA/HisF family.

Its subcellular location is the cytoplasm. It catalyses the reaction 1-(5-phospho-beta-D-ribosyl)-5-[(5-phospho-beta-D-ribosylamino)methylideneamino]imidazole-4-carboxamide = 5-[(5-phospho-1-deoxy-D-ribulos-1-ylimino)methylamino]-1-(5-phospho-beta-D-ribosyl)imidazole-4-carboxamide. It participates in amino-acid biosynthesis; L-histidine biosynthesis; L-histidine from 5-phospho-alpha-D-ribose 1-diphosphate: step 4/9. In Staphylococcus carnosus (strain TM300), this protein is 1-(5-phosphoribosyl)-5-[(5-phosphoribosylamino)methylideneamino] imidazole-4-carboxamide isomerase.